A 179-amino-acid chain; its full sequence is Shikimate kinase (179 aa).

Residue Gly-22–Ser-27 participates in ATP binding. Ser-26 is a Mg(2+) binding site. Substrate is bound by residues Asp-44, Arg-68, and Gly-90. ATP is bound at residue Arg-128. Arg-147 is a binding site for substrate.

The protein belongs to the shikimate kinase family. In terms of assembly, monomer. It depends on Mg(2+) as a cofactor.

The protein localises to the cytoplasm. The catalysed reaction is shikimate + ATP = 3-phosphoshikimate + ADP + H(+). The protein operates within metabolic intermediate biosynthesis; chorismate biosynthesis; chorismate from D-erythrose 4-phosphate and phosphoenolpyruvate: step 5/7. Catalyzes the specific phosphorylation of the 3-hydroxyl group of shikimic acid using ATP as a cosubstrate. This Geobacter metallireducens (strain ATCC 53774 / DSM 7210 / GS-15) protein is Shikimate kinase.